The following is a 141-amino-acid chain: MAKKVIKMVKLQIPAGKANPAPPVGPALGQAGVNIMGFCKEFNARTADQAGLIIPVEITVFEDRSFTFITKTPPAAVLLKKVAGIESGSGEPNRNKVATVKRDKVREIAETKMPDLNAASVEAAMRMVEGTARSMGIVIED.

It belongs to the universal ribosomal protein uL11 family. As to quaternary structure, part of the ribosomal stalk of the 50S ribosomal subunit. Interacts with L10 and the large rRNA to form the base of the stalk. L10 forms an elongated spine to which L12 dimers bind in a sequential fashion forming a multimeric L10(L12)X complex. In terms of processing, one or more lysine residues are methylated.

Its function is as follows. Forms part of the ribosomal stalk which helps the ribosome interact with GTP-bound translation factors. The protein is Large ribosomal subunit protein uL11 of Bacillus cereus (strain ATCC 10987 / NRS 248).